Here is a 384-residue protein sequence, read N- to C-terminus: S-adenosylmethionine synthase (384 aa).

Residue His-15 coordinates ATP. Asp-17 provides a ligand contact to Mg(2+). Glu-43 serves as a coordination point for K(+). 2 residues coordinate L-methionine: Glu-56 and Gln-99. Residues 99-109 (QSPDINQGVDK) form a flexible loop region. ATP-binding positions include 164-166 (DAK), 230-231 (RF), Asp-239, 245-246 (RK), Ala-262, and Lys-266. L-methionine is bound at residue Asp-239. Lys-270 lines the L-methionine pocket.

This sequence belongs to the AdoMet synthase family. As to quaternary structure, homotetramer; dimer of dimers. Mg(2+) is required as a cofactor. The cofactor is K(+).

Its subcellular location is the cytoplasm. The catalysed reaction is L-methionine + ATP + H2O = S-adenosyl-L-methionine + phosphate + diphosphate. It functions in the pathway amino-acid biosynthesis; S-adenosyl-L-methionine biosynthesis; S-adenosyl-L-methionine from L-methionine: step 1/1. In terms of biological role, catalyzes the formation of S-adenosylmethionine (AdoMet) from methionine and ATP. The overall synthetic reaction is composed of two sequential steps, AdoMet formation and the subsequent tripolyphosphate hydrolysis which occurs prior to release of AdoMet from the enzyme. In Vibrio vulnificus (strain YJ016), this protein is S-adenosylmethionine synthase.